Consider the following 761-residue polypeptide: Zinc finger protein 287 (761 aa).

Residues 49 to 131 (RQNFRNFPYP…TLVEDLTQIL (83 aa)) enclose the SCAN box domain. The interval 134–154 (EAPQNSTLSQDTPEEDPRGKH) is disordered. In terms of domain architecture, KRAB spans 170-238 (MTFKDVAVDI…IKEILEGPSP (69 aa)). 14 consecutive C2H2-type zinc fingers follow at residues 368–390 (YKCN…QSTH), 396–418 (YECE…QRMH), 424–446 (YECH…QRIH), 452–474 (YKCD…QRTH), 480–502 (YKCL…QRVH), 508–530 (YICN…QKIH), 536–558 (YKCN…QRIH), 564–586 (YKCN…QTTH), 592–614 (YICN…HRTH), 620–642 (YKCS…QRIH), 648–670 (FKCN…QRIH), 676–698 (YKCN…QRTH), 704–726 (YKCN…QRIH), and 732–754 (YACR…QRVH).

This sequence belongs to the krueppel C2H2-type zinc-finger protein family.

Its subcellular location is the nucleus. Its function is as follows. May be involved in transcriptional regulation. This Pongo pygmaeus (Bornean orangutan) protein is Zinc finger protein 287.